The chain runs to 141 residues: Nucleoside triphosphatase NudI (141 aa).

A Nudix hydrolase domain is found at 1 to 141; that stretch reads MRQRTIVCPL…RHTLALKGLL (141 aa). The Nudix box motif lies at 38–59; sequence GGVEPGERIEEALRREVREELG.

Belongs to the Nudix hydrolase family. NudI subfamily. Monomer. It depends on Mg(2+) as a cofactor.

It carries out the reaction a ribonucleoside 5'-triphosphate + H2O = a ribonucleoside 5'-phosphate + diphosphate + H(+). The catalysed reaction is a 2'-deoxyribonucleoside 5'-triphosphate + H2O = a 2'-deoxyribonucleoside 5'-phosphate + diphosphate + H(+). The enzyme catalyses dUTP + H2O = dUMP + diphosphate + H(+). It catalyses the reaction dTTP + H2O = dTMP + diphosphate + H(+). It carries out the reaction dCTP + H2O = dCMP + diphosphate + H(+). Functionally, catalyzes the hydrolysis of nucleoside triphosphates, with a preference for pyrimidine deoxynucleoside triphosphates (dUTP, dTTP and dCTP). This Salmonella schwarzengrund (strain CVM19633) protein is Nucleoside triphosphatase NudI.